Consider the following 181-residue polypeptide: UPF0302 protein lmo1921 (181 aa).

It belongs to the UPF0302 family.

The polypeptide is UPF0302 protein lmo1921 (Listeria monocytogenes serovar 1/2a (strain ATCC BAA-679 / EGD-e)).